A 429-amino-acid polypeptide reads, in one-letter code: Cell wall protein ECM33 (429 aa).

Positions 1–19 (MQFKNALTATAILSASALA) are cleaved as a signal peptide. 12 N-linked (GlcNAc...) asparagine glycosylation sites follow: asparagine 21, asparagine 56, asparagine 82, asparagine 196, asparagine 209, asparagine 227, asparagine 234, asparagine 241, asparagine 267, asparagine 279, asparagine 304, and asparagine 328. At serine 339 the chain carries Phosphoserine. The span at 361-401 (LSSTSTESSKSSATSSASSSGDASNAQASVSASASSSSSSS) shows a compositional bias: low complexity. The disordered stretch occupies residues 361–410 (LSSTSTESSKSSATSSASSSGDASNAQASVSASASSSSSSSKKSKGAAPE). The GPI-anchor amidated glycine moiety is linked to residue glycine 406. Positions 407-429 (AAPELVPATSFMGVVAAVAVALL) are cleaved as a propeptide — removed in mature form.

Belongs to the SPS2 family. Post-translationally, the GPI-anchor is attached to the protein in the endoplasmic reticulum and serves to target the protein to the cell surface. There, the glucosamine-inositol phospholipid moiety is cleaved off and the GPI-modified mannoprotein is covalently attached via its lipidless GPI glycan remnant to the 1,6-beta-glucan of the outer cell wall layer.

The protein localises to the cell membrane. It localises to the secreted. Its subcellular location is the cell wall. Its function is as follows. Required for proper cell wall integrity and for the correct assembly of the mannoprotein outer layer of the cell wall. Important for apical bud growth. The protein is Cell wall protein ECM33 (ECM33) of Saccharomyces cerevisiae (strain YJM789) (Baker's yeast).